The primary structure comprises 203 residues: Thymidylate kinase (203 aa).

10–17 (GVEGSGKT) lines the ATP pocket.

This sequence belongs to the thymidylate kinase family.

The enzyme catalyses dTMP + ATP = dTDP + ADP. Phosphorylation of dTMP to form dTDP in both de novo and salvage pathways of dTTP synthesis. The protein is Thymidylate kinase of Carboxydothermus hydrogenoformans (strain ATCC BAA-161 / DSM 6008 / Z-2901).